Here is a 609-residue protein sequence, read N- to C-terminus: MPDYRSKTSTHGRNMAGARGLWRATGMKDEDFGKPIIAVVNSFTQFVPGHVHLKDLGQMVAEQIQAAGGVAKEFNTIAVDDGIAMGHDGMLYSLPSRDLIADSVEYMVNAHCADAMVCISNCDKITPGMLMAAMRLNIPVVFVSGGPMEAGKVKFRGNEKAIDLVDAMVVAADDSYTDEEVQAFERSACPTCGSCSGMFTANSMNCLTEALGLSLPGNGSIVATHANRKKLFLKAGELIVSLAKRYYEQDDSSILPRSIATKAAYENAMTLDIAMGGSTNTVLHLLAAASEAEVDFTMDDIDRLSRNVPVLCKVAPAKQDVHMEDVHRAGGIMSILGELDRAKLLNTTVSTVHEKTLQDALNKWDIIRTEDADVYEFFRSSPGGVPTQVAFSQNRYYSTLDGDRENGVIRNAEHAFSKDGGLAVLYGNIALEGCIVKTAGVDESILKFNGTARVFESQDAAVEAILGNEIKAGDVVVIRYEGPRGGPGMQEMLYPTSYLKSKGLGKDCALITDGRFSGGSSGLSIGHISPEAAEGGAIGLVEDGDLIEIDIPNRSMNLKVDDETLAARRKAQDEKGWKPVEERKRKVSKALKVYAMHTTSAAKGAVRIL.

D81 provides a ligand contact to Mg(2+). A [2Fe-2S] cluster-binding site is contributed by C122. Mg(2+) contacts are provided by D123 and K124. K124 is modified (N6-carboxylysine). Residue C195 coordinates [2Fe-2S] cluster. Mg(2+) is bound at residue E491. The active-site Proton acceptor is S517.

It belongs to the IlvD/Edd family. Homodimer. [2Fe-2S] cluster serves as cofactor. Requires Mg(2+) as cofactor.

It carries out the reaction (2R)-2,3-dihydroxy-3-methylbutanoate = 3-methyl-2-oxobutanoate + H2O. The enzyme catalyses (2R,3R)-2,3-dihydroxy-3-methylpentanoate = (S)-3-methyl-2-oxopentanoate + H2O. The protein operates within amino-acid biosynthesis; L-isoleucine biosynthesis; L-isoleucine from 2-oxobutanoate: step 3/4. Its pathway is amino-acid biosynthesis; L-valine biosynthesis; L-valine from pyruvate: step 3/4. Functionally, functions in the biosynthesis of branched-chain amino acids. Catalyzes the dehydration of (2R,3R)-2,3-dihydroxy-3-methylpentanoate (2,3-dihydroxy-3-methylvalerate) into 2-oxo-3-methylpentanoate (2-oxo-3-methylvalerate) and of (2R)-2,3-dihydroxy-3-methylbutanoate (2,3-dihydroxyisovalerate) into 2-oxo-3-methylbutanoate (2-oxoisovalerate), the penultimate precursor to L-isoleucine and L-valine, respectively. The chain is Dihydroxy-acid dehydratase 1 from Acinetobacter baylyi (strain ATCC 33305 / BD413 / ADP1).